The primary structure comprises 362 residues: Peptide chain release factor 1 (362 aa).

Q237 is subject to N5-methylglutamine. Residues 279–305 are disordered; sequence RLQQAEDEKRRSEEESSRRNLVASGDR. Positions 282 to 296 are enriched in basic and acidic residues; it reads QAEDEKRRSEEESSR.

This sequence belongs to the prokaryotic/mitochondrial release factor family. In terms of processing, methylated by PrmC. Methylation increases the termination efficiency of RF1.

Its subcellular location is the cytoplasm. Its function is as follows. Peptide chain release factor 1 directs the termination of translation in response to the peptide chain termination codons UAG and UAA. In Colwellia psychrerythraea (strain 34H / ATCC BAA-681) (Vibrio psychroerythus), this protein is Peptide chain release factor 1.